The primary structure comprises 777 residues: Ribosome biogenesis protein ERB1 (777 aa).

The interval 1–122 (MAPTAPAKKR…RPNYRVVEDA (122 aa)) is disordered. Acidic residues predominate over residues 36–67 (SEDDSDFVASGDEDEEDEDEDEDEDKDEDDEH). WD repeat units lie at residues 430-469 (GHEG…QVWA), 473-513 (SSDE…PEVE), 562-604 (TVRS…SQIP), 606-645 (RKLS…LVKV), 648-687 (PGAR…RPYK), 691-731 (FHPQ…DLME), and 747-777 (VDSL…RLWM).

This sequence belongs to the WD repeat BOP1/ERB1 family. Component of the NOP7 complex, composed of ERB1, NOP7 and YTM1. The complex is held together by ERB1, which interacts with NOP7 via its N-terminal domain and with YTM1 via a high-affinity interaction between the seven-bladed beta-propeller domains of the 2 proteins. The NOP7 complex associates with the 66S pre-ribosome.

It is found in the nucleus. The protein resides in the nucleolus. It localises to the nucleoplasm. Component of the NOP7 complex, which is required for maturation of the 25S and 5.8S ribosomal RNAs and formation of the 60S ribosome. The polypeptide is Ribosome biogenesis protein ERB1 (Pyricularia oryzae (strain 70-15 / ATCC MYA-4617 / FGSC 8958) (Rice blast fungus)).